The following is a 548-amino-acid chain: Lysine--tRNA ligase (548 aa).

A 'HIGH' region motif is present at residues 43–51 (PSGVPHLGN). Positions 308–312 (PFSSS) match the 'KMSKS' region motif.

Belongs to the class-I aminoacyl-tRNA synthetase family.

The protein localises to the cytoplasm. The catalysed reaction is tRNA(Lys) + L-lysine + ATP = L-lysyl-tRNA(Lys) + AMP + diphosphate. The sequence is that of Lysine--tRNA ligase from Halobacterium salinarum (strain ATCC 700922 / JCM 11081 / NRC-1) (Halobacterium halobium).